The following is a 229-amino-acid chain: Coiled-coil domain-containing protein 134 (229 aa).

The N-terminal stretch at 1-22 (MDPVQLLSFLLALLLPLGTALD) is a signal peptide. Positions 192–218 (NTDAFQKALREEEKRRRKEEKRKEIRK) form a coiled coil. The disordered stretch occupies residues 201-229 (REEEKRRRKEEKRKEIRKGPRITRSRSEL). The span at 219–229 (GPRITRSRSEL) shows a compositional bias: basic residues. Residues 226–229 (RSEL) carry the Prevents secretion from ER motif.

It belongs to the CCDC134 family.

The protein resides in the endoplasmic reticulum lumen. Molecular adapter required to prevent protein hyperglycosylation of HSP90B1: during translation, associates with nascent HSP90B1 and the STT3A catalytic component of the OST-A complex and tethers them to a specialized translocon that forms a microenvironment for HSP90B1 folding. In the CCDC134-containing translocon, STT3A associates with the SRT pseudosubstrate motif of HSP90B1, preventing access to facultative glycosylation sites until folding is completed, preventing hyperglycosylation and subsequent degradation of HSP90B1. The protein is Coiled-coil domain-containing protein 134 (ccdc134) of Xenopus tropicalis (Western clawed frog).